A 279-amino-acid polypeptide reads, in one-letter code: Urease accessory protein UreD (279 aa).

It belongs to the UreD family. UreD, UreF and UreG form a complex that acts as a GTP-hydrolysis-dependent molecular chaperone, activating the urease apoprotein by helping to assemble the nickel containing metallocenter of UreC. The UreE protein probably delivers the nickel.

It localises to the cytoplasm. Its function is as follows. Required for maturation of urease via the functional incorporation of the urease nickel metallocenter. The sequence is that of Urease accessory protein UreD from Trichormus variabilis (strain ATCC 29413 / PCC 7937) (Anabaena variabilis).